The sequence spans 107 residues: Acetyl-CoA acetyltransferase (107 aa).

C88 serves as the catalytic Acyl-thioester intermediate.

Belongs to the thiolase-like superfamily. Thiolase family. As to quaternary structure, homotetramer.

Its subcellular location is the cytoplasm. The catalysed reaction is 2 acetyl-CoA = acetoacetyl-CoA + CoA. Functionally, catalyzes the condensation of two molecules of acetyl-CoA to produce acetoacetyl-CoA. The sequence is that of Acetyl-CoA acetyltransferase (thi) from Clostridioides difficile (Peptoclostridium difficile).